The sequence spans 315 residues: Petrobactin import system permease protein YclO (315 aa).

9 consecutive transmembrane segments (helical) span residues Ile7–Gly27, Val40–Ile60, Leu76–Met96, Ile100–Met120, Ile128–Phe148, Ile172–Trp192, Leu223–Leu243, Tyr262–Val282, and Phe288–Leu308.

The protein belongs to the binding-protein-dependent transport system permease family. FecCD subfamily. As to quaternary structure, the complex is composed of two ATP-binding proteins (YclP), two transmembrane proteins (YclN and YclO) and a solute-binding protein (YclQ).

Its subcellular location is the cell membrane. Functionally, part of the ABC transporter complex YclNOPQ involved in uptake of ferric-petrobactin. Petrobactin is a photoreactive 3,4-catecholate siderophore produced by many members of the B.cereus group, including B.anthracis. Probably responsible for the translocation of the substrate across the membrane. In Bacillus subtilis (strain 168), this protein is Petrobactin import system permease protein YclO (yclO).